A 790-amino-acid chain; its full sequence is Centrosomal protein of 78 kDa (790 aa).

Disordered regions lie at residues 325 to 345 (YQWV…QRKK), 362 to 385 (GLAT…YAPN), 428 to 462 (VTVT…IKEE), 654 to 732 (AKTG…LNEP), and 756 to 790 (KTIK…AHLT). Phosphoserine occurs at positions 330 and 332. A compositionally biased stretch (low complexity) spans 428–438 (VTVTVESPSSS). Residues 455–510 (QKTSIKEETLQEKLEECLRQLKEERVIRLKADKRVSELEHENAQLRNINFSLSEAL) are a coiled coil. Composition is skewed to basic and acidic residues over residues 693–708 (PSRR…KDLL) and 721–732 (GPGDRRSLLNEP).

Belongs to the CEP78 family. Interacts with PLK4. Interacts with FAM161A. Interacts with IFT20; regulating IFT20 stability and localization. Interacts with TTC21A; regulating TTC21A stability and localization. Interacts with USP16; promoting USP16-dependent deubiquitination of tektins. Interacts with DCAF1/VPRBP; promoting localization of the EDVP complex to centrosomes. Interacts with CEP350; promoting CEP78 localization to centrosome and centriole. In terms of tissue distribution, expressed by photoreceptor cells in the retina.

The protein localises to the cytoplasm. Its subcellular location is the cytoskeleton. It localises to the microtubule organizing center. The protein resides in the centrosome. It is found in the centriole. The protein localises to the cilium basal body. Functionally, centriole wall protein that localizes to mature centrioles and regulates centriole and cilia biogenesis. Involved in centrosome duplication: required for efficient PLK4 centrosomal localization and PLK4-induced overduplication of centrioles. Involved in cilium biogenesis and controls cilium length. Acts as a regulator of protein stability by preventing ubiquitination of centrosomal proteins, such as CCP110 and tektins. Associates with the EDVP complex, preventing ubiquitination and degradation of CCP110. Promotes deubiquitination of tektin proteins (TEKT1, TEKT2, TEK3, TEKT4 and TEKT5) via its interaction with USP16. The polypeptide is Centrosomal protein of 78 kDa (Mus musculus (Mouse)).